The primary structure comprises 55 residues: Ribulose bisphosphate carboxylase large chain (55 aa).

The active-site Proton acceptor is His-18. Positions 19 and 27 each coordinate substrate.

This sequence belongs to the RuBisCO large chain family. Type I subfamily. As to quaternary structure, heterohexadecamer of 8 large chains and 8 small chains; disulfide-linked. The disulfide link is formed within the large subunit homodimers. It depends on Mg(2+) as a cofactor. Post-translationally, the disulfide bond which can form in the large chain dimeric partners within the hexadecamer appears to be associated with oxidative stress and protein turnover.

The protein localises to the plastid. It localises to the chloroplast. It carries out the reaction 2 (2R)-3-phosphoglycerate + 2 H(+) = D-ribulose 1,5-bisphosphate + CO2 + H2O. The enzyme catalyses D-ribulose 1,5-bisphosphate + O2 = 2-phosphoglycolate + (2R)-3-phosphoglycerate + 2 H(+). RuBisCO catalyzes two reactions: the carboxylation of D-ribulose 1,5-bisphosphate, the primary event in carbon dioxide fixation, as well as the oxidative fragmentation of the pentose substrate in the photorespiration process. Both reactions occur simultaneously and in competition at the same active site. This chain is Ribulose bisphosphate carboxylase large chain, found in Vitis sp. (Grape).